The sequence spans 200 residues: Lipid A acyltransferase PagP (200 aa).

An N-terminal signal peptide occupies residues 1 to 24 (MRLKLTSHTCLFALSSLLVTPAFA). Residues H72, D115, and S116 contribute to the active site.

It belongs to the lipid A palmitoyltransferase family. As to quaternary structure, homodimer.

The protein localises to the cell outer membrane. The enzyme catalyses a lipid A + a 1,2-diacyl-sn-glycero-3-phosphocholine = a hepta-acyl lipid A + a 2-acyl-sn-glycero-3-phosphocholine. The catalysed reaction is a lipid IVA + a 1,2-diacyl-sn-glycero-3-phosphocholine = a lipid IVB + a 2-acyl-sn-glycero-3-phosphocholine. It carries out the reaction a lipid IIA + a 1,2-diacyl-sn-glycero-3-phosphocholine = a lipid IIB + a 2-acyl-sn-glycero-3-phosphocholine. In terms of biological role, transfers a fatty acid residue from the sn-1 position of a phospholipid to the N-linked hydroxyfatty acid chain on the proximal unit of lipid A or its precursors. This chain is Lipid A acyltransferase PagP, found in Dickeya dadantii (strain 3937) (Erwinia chrysanthemi (strain 3937)).